The sequence spans 354 residues: Protein CbrA (354 aa).

Belongs to the CbrA family.

This chain is Protein CbrA (cbrA), found in Escherichia coli (strain K12).